A 902-amino-acid polypeptide reads, in one-letter code: Cytosolic carboxypeptidase 2 (902 aa).

The Peptidase M14 domain maps to 396–666 (YPYTYTDLQC…HVCDTLLDFC (271 aa)). 3 residues coordinate Zn(2+): histidine 462, glutamate 465, and histidine 558. The active-site Proton donor/acceptor is the glutamate 630. A compositionally biased stretch (basic residues) spans 746 to 758 (FKKKKKKSLQTRK). 2 disordered regions span residues 746-770 (FKKK…KNLM) and 796-879 (FKNS…PRSR). Residues 853–866 (VSCSPKRTINSSQE) show a composition bias toward polar residues.

It belongs to the peptidase M14 family. Interacts with RARRES1, KIF11 AND MAPRE1. It depends on Zn(2+) as a cofactor.

It is found in the cytoplasm. The protein resides in the cytosol. Its subcellular location is the cytoskeleton. It localises to the microtubule organizing center. The protein localises to the centrosome. It is found in the centriole. The protein resides in the cilium basal body. The enzyme catalyses (L-glutamyl)(n+1)-gamma-L-glutamyl-L-glutamyl-[protein] + H2O = (L-glutamyl)(n)-gamma-L-glutamyl-L-glutamyl-[protein] + L-glutamate. Inhibited by RARRES1. In terms of biological role, metallocarboxypeptidase that mediates deglutamylation of tubulin and non-tubulin target proteins. Catalyzes the removal of polyglutamate side chains present on the gamma-carboxyl group of glutamate residues within the C-terminal tail of tubulin protein. Specifically cleaves tubulin long-side-chains, while it is not able to remove the branching point glutamate. Also catalyzes the removal of polyglutamate residues from the carboxy-terminus of non-tubulin proteins such as MYLK. This chain is Cytosolic carboxypeptidase 2, found in Homo sapiens (Human).